A 113-amino-acid chain; its full sequence is U11-theraphotoxin-Hhn1a (113 aa).

An N-terminal signal peptide occupies residues 1–21; the sequence is MNTVRVTFLLVFVLAVSLGQA. Residues 22-74 constitute a propeptide that is removed on maturation; the sequence is DKDENRMEVQEKTEQGKSYLDFAENLLLQKLEELEAKLLEEDSEESRNSRQKR. The tract at residues 61 to 83 is disordered; that stretch reads EEDSEESRNSRQKRCIGEGVPCD. Intrachain disulfides connect C75–C90, C82–C95, and C89–C110.

This sequence belongs to the neurotoxin 14 (magi-1) family. 01 (HNTX-16) subfamily. In terms of tissue distribution, expressed by the venom gland.

It is found in the secreted. In terms of biological role, probable ion channel inhibitor. The chain is U11-theraphotoxin-Hhn1a from Cyriopagopus hainanus (Chinese bird spider).